Reading from the N-terminus, the 217-residue chain is Elongation factor Ts (217 aa).

The interval 81–84 (TDFV) is involved in Mg(2+) ion dislocation from EF-Tu.

It belongs to the EF-Ts family.

It is found in the cytoplasm. In terms of biological role, associates with the EF-Tu.GDP complex and induces the exchange of GDP to GTP. It remains bound to the aminoacyl-tRNA.EF-Tu.GTP complex up to the GTP hydrolysis stage on the ribosome. This chain is Elongation factor Ts, found in Myxococcus xanthus (strain DK1622).